A 544-amino-acid chain; its full sequence is Chaperonin GroEL (544 aa).

Residues 30–33 (TLGP), lysine 51, 87–91 (DGTTT), glycine 415, 478–480 (DVA), and aspartate 494 contribute to the ATP site. The tract at residues 524 to 544 (PEKEKKPATPAGAGGMGDMEY) is disordered. The segment covering 535-544 (GAGGMGDMEY) has biased composition (gly residues).

It belongs to the chaperonin (HSP60) family. In terms of assembly, forms a cylinder of 14 subunits composed of two heptameric rings stacked back-to-back. Interacts with the co-chaperonin GroES.

The protein resides in the cytoplasm. It catalyses the reaction ATP + H2O + a folded polypeptide = ADP + phosphate + an unfolded polypeptide.. Together with its co-chaperonin GroES, plays an essential role in assisting protein folding. The GroEL-GroES system forms a nano-cage that allows encapsulation of the non-native substrate proteins and provides a physical environment optimized to promote and accelerate protein folding. This chain is Chaperonin GroEL, found in Methylacidiphilum infernorum (isolate V4) (Methylokorus infernorum (strain V4)).